We begin with the raw amino-acid sequence, 114 residues long: Aspartate 1-decarboxylase (114 aa).

S25 acts as the Schiff-base intermediate with substrate; via pyruvic acid in catalysis. The residue at position 25 (S25) is a Pyruvic acid (Ser). T57 is a substrate binding site. Y58 functions as the Proton donor in the catalytic mechanism. Position 71-73 (71-73 (GAA)) interacts with substrate.

Belongs to the PanD family. In terms of assembly, heterooctamer of four alpha and four beta subunits. Pyruvate is required as a cofactor. In terms of processing, is synthesized initially as an inactive proenzyme, which is activated by self-cleavage at a specific serine bond to produce a beta-subunit with a hydroxyl group at its C-terminus and an alpha-subunit with a pyruvoyl group at its N-terminus.

The protein resides in the cytoplasm. The catalysed reaction is L-aspartate + H(+) = beta-alanine + CO2. Its pathway is cofactor biosynthesis; (R)-pantothenate biosynthesis; beta-alanine from L-aspartate: step 1/1. Functionally, catalyzes the pyruvoyl-dependent decarboxylation of aspartate to produce beta-alanine. This Haloquadratum walsbyi (strain DSM 16790 / HBSQ001) protein is Aspartate 1-decarboxylase.